The following is a 273-amino-acid chain: Cytoplasmic phosphatidylinositol transfer protein 1 (273 aa).

The tract at residues 244-273 (QAETNEKIHNTSGGANAAANAKEANDGDID) is disordered.

It belongs to the PtdIns transfer protein family. PI transfer class IIB subfamily.

Phosphatidylinositol transfer proteins mediate the monomeric transport of lipids by shielding a lipid from the aqueous environment and binding the lipid in a hydrophobic cavity. The chain is Cytoplasmic phosphatidylinositol transfer protein 1 (rdgBbeta) from Drosophila melanogaster (Fruit fly).